The primary structure comprises 318 residues: MLRSTHPPPSSPSSSSSGGGGGGGSSASSSSEKTMVGGGGGGGGGSGSAAPSGAKLLQILNVRVVGSGERVVVLSHGFGTDQSAWSRVLPYLTRDHRVVLYDLVCAGSVNPDHFDFRRYDNLDAYVDDLLAILDALRIPRCAFVGHSVSAMIGILASIRRPDLFAKLVLIGASPRFLNDSDYHGGFELEEIQQVFDAMGANYSAWATGYAPLAVGADVPAAVQEFSRTLFNMRPDISLHVCQTVFKTDLRGVLGMVRAPCVVVQTTRDVSVPASVAAYLKAHLGGRTTVEFLQTEGHLPHLSAPSLLAQVLRRALARY.

Residues Met-1–Ser-11 are compositionally biased toward pro residues. The tract at residues Met-1–Ser-48 is disordered. Over residues Val-36 to Gly-47 the composition is skewed to gly residues. The active-site Nucleophile is Ser-147. Substrate-binding residues include Ser-147 and Cys-241. Active-site residues include Asp-268 and His-297. His-297 provides a ligand contact to substrate.

The protein belongs to the AB hydrolase superfamily. In terms of assembly, interacts with D53. The interaction between D53 and D14 is enhanced in the presence of strigolactones. The interaction with D53 occurs in the presence of (2'R) stereoisomers of strigolactones, but not (2'S) stereoisomers. Interacts with SLR1 in a strigolactone-dependent manner. Interacts with D3 in a strigolactone-dependent manner. As to expression, expressed in the parenchyma cells of the root stele and lateral roots, vascular tissues of vein and leaf sheath, ligule base, auricle base and stem base.

It is found in the cytoplasm. The protein resides in the nucleus. In terms of biological role, involved in strigolactone (SL) signaling pathway. May function downstream of SL synthesis, as a component of hormone signaling or as an enzyme that participates in the conversion of SL to the bioactive form. Strigolactones are hormones that inhibit tillering and shoot branching through the MAX-dependent pathway, contribute to the regulation of shoot architectural response to phosphate-limiting conditions and function as rhizosphere signal that stimulates hyphal branching of arbuscular mycorrhizal fungi and trigger seed germination of root parasitic weeds. Strigolactone-dependent association of D14 with D3 and D53 (a repressor of SL signaling) triggers D53 ubiquitination and degradation. Hydrolyzes the butenolide ring of SLs. A reaction product D-OH is trapped in the cavity of D14, inducing the interaction with SLR1, and probably with other proteins such as D3 and D53. Contributes to the negative regulation of gibberellin signaling. The chain is Strigolactone esterase D14 from Oryza sativa subsp. japonica (Rice).